Consider the following 142-residue polypeptide: Large ribosomal subunit protein uL11 (142 aa).

Belongs to the universal ribosomal protein uL11 family. In terms of assembly, part of the ribosomal stalk of the 50S ribosomal subunit. Interacts with L10 and the large rRNA to form the base of the stalk. L10 forms an elongated spine to which L12 dimers bind in a sequential fashion forming a multimeric L10(L12)X complex. One or more lysine residues are methylated.

Functionally, forms part of the ribosomal stalk which helps the ribosome interact with GTP-bound translation factors. The chain is Large ribosomal subunit protein uL11 from Hamiltonella defensa subsp. Acyrthosiphon pisum (strain 5AT).